Reading from the N-terminus, the 87-residue chain is Kappa-2-bungarotoxin (87 aa).

Residues 1–21 (MKTLLLTLVVVTIVCLDLGYT) form the signal peptide. Disulfide bonds link Cys-24–Cys-42, Cys-35–Cys-63, Cys-48–Cys-52, Cys-67–Cys-79, and Cys-80–Cys-85.

The protein belongs to the three-finger toxin family. Long-chain subfamily. Kappa-neurotoxin sub-subfamily. As to quaternary structure, homodimer and heterodimer with kappa 3-bungarotoxin; non-covalently linked. As to expression, expressed by the venom gland.

It localises to the secreted. In terms of biological role, postsynaptic neurotoxin that binds and inhibits neuronal nicotinic acetylcholine receptors (nAChR) with high affinity (IC(50)&lt;100 nM). Is a selective, and slowly reversible antagonist of alpha-3/CHRNA3-containing and some alpha-4/CHRNA4-containing AChRs. The protein is Kappa-2-bungarotoxin of Bungarus multicinctus (Many-banded krait).